Reading from the N-terminus, the 102-residue chain is UPF0328 protein ECU10_1820 (102 aa).

Belongs to the UPF0328 family.

In Encephalitozoon cuniculi (strain GB-M1) (Microsporidian parasite), this protein is UPF0328 protein ECU10_1820.